A 156-amino-acid polypeptide reads, in one-letter code: Small ribosomal subunit protein uS7 (156 aa).

This sequence belongs to the universal ribosomal protein uS7 family. As to quaternary structure, part of the 30S ribosomal subunit. Contacts proteins S9 and S11.

Its function is as follows. One of the primary rRNA binding proteins, it binds directly to 16S rRNA where it nucleates assembly of the head domain of the 30S subunit. Is located at the subunit interface close to the decoding center, probably blocks exit of the E-site tRNA. The chain is Small ribosomal subunit protein uS7 from Synechocystis sp. (strain ATCC 27184 / PCC 6803 / Kazusa).